Here is a 160-residue protein sequence, read N- to C-terminus: MATEKVFPMTLDGKAKLENELQELKTVKRKEVVERIKIARSFGDLSENSEYDSAKDEQAFVEGRITTIENMIRNAQIIDAAEAHNGLVTLGNTVTFIELPDGEEETYTIVGSAEADPFEGKISNDSPIAKGLLGHKEGEEVTIQTPAGDMSVKIEKITAS.

Residues Thr-10–Lys-37 adopt a coiled-coil conformation.

It belongs to the GreA/GreB family.

Its function is as follows. Necessary for efficient RNA polymerase transcription elongation past template-encoded arresting sites. The arresting sites in DNA have the property of trapping a certain fraction of elongating RNA polymerases that pass through, resulting in locked ternary complexes. Cleavage of the nascent transcript by cleavage factors such as GreA or GreB allows the resumption of elongation from the new 3'terminus. GreA releases sequences of 2 to 3 nucleotides. The chain is Transcription elongation factor GreA from Listeria innocua serovar 6a (strain ATCC BAA-680 / CLIP 11262).